The primary structure comprises 497 residues: Aluminum-activated malate transporter 10 (497 aa).

6 helical membrane passes run 66-86 (KVVH…FYYM), 88-108 (PLYD…VVVF), 123-143 (VVAT…ATQS), 148-168 (VFVI…SRFV), 173-193 (ARFD…SVGG), and 210-230 (IAIG…IWAG). Disordered stretches follow at residues 413–437 (PIET…ERTT) and 476–497 (DFEQ…PLSS). Residues 417–436 (NKPEEVPSEEENKVDSEERT) are compositionally biased toward basic and acidic residues. The segment covering 487–497 (DNNTKQPPLSS) has biased composition (polar residues).

This sequence belongs to the aromatic acid exporter (TC 2.A.85) family.

It localises to the membrane. Its function is as follows. Malate transporter. This is Aluminum-activated malate transporter 10 (ALMT10) from Arabidopsis thaliana (Mouse-ear cress).